The chain runs to 233 residues: Pirin-like protein YhaK (233 aa).

It belongs to the pirin family. Monomer.

It is found in the cytoplasm. Its function is as follows. Does not have quercetin 2,3-dioxygenase activity. The polypeptide is Pirin-like protein YhaK (yhaK) (Escherichia coli O157:H7).